We begin with the raw amino-acid sequence, 404 residues long: Cysteine desulfurase IscS (404 aa).

Pyridoxal 5'-phosphate-binding positions include 75-76 (AT), Asn-155, Gln-183, and 203-205 (SAH). An N6-(pyridoxal phosphate)lysine modification is found at Lys-206. Thr-243 is a pyridoxal 5'-phosphate binding site. Cys-328 (cysteine persulfide intermediate) is an active-site residue. A [2Fe-2S] cluster-binding site is contributed by Cys-328.

The protein belongs to the class-V pyridoxal-phosphate-dependent aminotransferase family. NifS/IscS subfamily. As to quaternary structure, homodimer. Forms a heterotetramer with IscU, interacts with other sulfur acceptors. Pyridoxal 5'-phosphate serves as cofactor.

Its subcellular location is the cytoplasm. It catalyses the reaction (sulfur carrier)-H + L-cysteine = (sulfur carrier)-SH + L-alanine. It functions in the pathway cofactor biosynthesis; iron-sulfur cluster biosynthesis. Functionally, master enzyme that delivers sulfur to a number of partners involved in Fe-S cluster assembly, tRNA modification or cofactor biosynthesis. Catalyzes the removal of elemental sulfur atoms from cysteine to produce alanine. Functions as a sulfur delivery protein for Fe-S cluster synthesis onto IscU, an Fe-S scaffold assembly protein, as well as other S acceptor proteins. In Pseudomonas aeruginosa (strain LESB58), this protein is Cysteine desulfurase IscS.